A 520-amino-acid chain; its full sequence is Probable kinase 098L (520 aa).

The Protein kinase domain occupies 82–393 (LTSVQSFGSK…NSPLLKKGFV (312 aa)). ATP contacts are provided by residues 88-96 (FGSKSKQGI) and K111. The active-site Proton acceptor is D205. Residues 416 to 442 (QTAQLIETDKEILDNLIDDLELKIVRK) are a coiled coil.

This sequence belongs to the protein kinase superfamily.

Its function is as follows. Probable kinase. The sequence is that of Probable kinase 098L from Aedes vexans (Inland floodwater mosquito).